The primary structure comprises 85 residues: Large ribosomal subunit protein bL27 (85 aa).

Positions 1–20 are disordered; the sequence is MAHKKAGGSTRNGRDSEAKR.

Belongs to the bacterial ribosomal protein bL27 family.

This is Large ribosomal subunit protein bL27 from Serratia proteamaculans (strain 568).